The sequence spans 276 residues: MATFTTADVKRLRELTAAGMMDCKKALEEADGDFDKAVELLRIKGAKDVGKRAERTTANGLVAAATDDGVGVLVEVKCETDFVAKGERFQELGRRIVQAALTTETDDPAVLLDAVVDGRSVRDLVEENSAALGEKIELGRLARFAGAAVVSYLHKTSPDLPPQLGVLVELSAPNAEAGKDIAQHIAAFAPRYLTRADVPEDVVAAERRIAEATAREEGKPEQALPKIVEGRVTGFFKETVLTEQAFAKDPKKTVQQVLDDAGVRVVRFARFRIGQL.

The involved in Mg(2+) ion dislocation from EF-Tu stretch occupies residues 80–83 (TDFV).

Belongs to the EF-Ts family.

It localises to the cytoplasm. Its function is as follows. Associates with the EF-Tu.GDP complex and induces the exchange of GDP to GTP. It remains bound to the aminoacyl-tRNA.EF-Tu.GTP complex up to the GTP hydrolysis stage on the ribosome. The sequence is that of Elongation factor Ts from Acidothermus cellulolyticus (strain ATCC 43068 / DSM 8971 / 11B).